A 284-amino-acid polypeptide reads, in one-letter code: MTAQIIDGKALAEELRQGFKARVEALTAKGHKPGLVVILVGADPASEVYVRNKVNGCLAIGMHSEKITYDATIDQATVLNKIAELNADPNIHGILVQLPLPKHFDEEAVLEAISAEKDVDGFHAENVGALAQGNPRFIPCTPYGVMKMFEKGNVDLTGKEAVVIGRSNIVGKPMALLLINAGATVTVCNSRTKDLKFHTSRADILVAAVGKPKFVTGDMVKPGAVVIDVGINRLPDGKLCGDVDFASCLEVAGQITPVPGGVGPMTITMLLANTIEAAERKAGL.

NADP(+)-binding positions include 165-167 (GRS), S190, and I231.

Belongs to the tetrahydrofolate dehydrogenase/cyclohydrolase family. Homodimer.

The catalysed reaction is (6R)-5,10-methylene-5,6,7,8-tetrahydrofolate + NADP(+) = (6R)-5,10-methenyltetrahydrofolate + NADPH. It catalyses the reaction (6R)-5,10-methenyltetrahydrofolate + H2O = (6R)-10-formyltetrahydrofolate + H(+). The protein operates within one-carbon metabolism; tetrahydrofolate interconversion. In terms of biological role, catalyzes the oxidation of 5,10-methylenetetrahydrofolate to 5,10-methenyltetrahydrofolate and then the hydrolysis of 5,10-methenyltetrahydrofolate to 10-formyltetrahydrofolate. In Dechloromonas aromatica (strain RCB), this protein is Bifunctional protein FolD.